We begin with the raw amino-acid sequence, 371 residues long: Queuine tRNA-ribosyltransferase (371 aa).

Asp89 serves as the catalytic Proton acceptor. Substrate-binding positions include 89-93 (DSGGF), Asp143, Gln185, and Gly212. The segment at 243–249 (GVGTPED) is RNA binding. Catalysis depends on Asp262, which acts as the Nucleophile. Residues 267–271 (TRNAR) form an RNA binding; important for wobble base 34 recognition region. Residues Cys300, Cys302, Cys305, and His331 each contribute to the Zn(2+) site.

This sequence belongs to the queuine tRNA-ribosyltransferase family. Homodimer. Within each dimer, one monomer is responsible for RNA recognition and catalysis, while the other monomer binds to the replacement base PreQ1. Zn(2+) is required as a cofactor.

It catalyses the reaction 7-aminomethyl-7-carbaguanine + guanosine(34) in tRNA = 7-aminomethyl-7-carbaguanosine(34) in tRNA + guanine. It participates in tRNA modification; tRNA-queuosine biosynthesis. In terms of biological role, catalyzes the base-exchange of a guanine (G) residue with the queuine precursor 7-aminomethyl-7-deazaguanine (PreQ1) at position 34 (anticodon wobble position) in tRNAs with GU(N) anticodons (tRNA-Asp, -Asn, -His and -Tyr). Catalysis occurs through a double-displacement mechanism. The nucleophile active site attacks the C1' of nucleotide 34 to detach the guanine base from the RNA, forming a covalent enzyme-RNA intermediate. The proton acceptor active site deprotonates the incoming PreQ1, allowing a nucleophilic attack on the C1' of the ribose to form the product. After dissociation, two additional enzymatic reactions on the tRNA convert PreQ1 to queuine (Q), resulting in the hypermodified nucleoside queuosine (7-(((4,5-cis-dihydroxy-2-cyclopenten-1-yl)amino)methyl)-7-deazaguanosine). This is Queuine tRNA-ribosyltransferase from Nitrosomonas europaea (strain ATCC 19718 / CIP 103999 / KCTC 2705 / NBRC 14298).